The chain runs to 856 residues: Leucine--tRNA ligase (856 aa).

A 'HIGH' region motif is present at residues 53-63; the sequence is PYPSGNLHMGH. The 'KMSKS' region signature appears at 622–626; it reads KMSKS. Lysine 625 is an ATP binding site.

This sequence belongs to the class-I aminoacyl-tRNA synthetase family.

It localises to the cytoplasm. It carries out the reaction tRNA(Leu) + L-leucine + ATP = L-leucyl-tRNA(Leu) + AMP + diphosphate. The chain is Leucine--tRNA ligase from Prochlorococcus marinus (strain MIT 9215).